Consider the following 381-residue polypeptide: NAD-dependent methanol dehydrogenase (381 aa).

The protein belongs to the iron-containing alcohol dehydrogenase family. In terms of assembly, homodecamer. Mg(2+) is required as a cofactor. Requires Zn(2+) as cofactor.

It localises to the cytoplasm. It carries out the reaction methanol + NAD(+) = formaldehyde + NADH + H(+). It functions in the pathway one-carbon metabolism; methanol degradation; formaldehyde from methanol: step 1/1. Stimulated by the activator protein Act which requires the presence of magnesium ions. Inhibited by 1,10-phenanthroline. Functionally, catalyzes the oxidation of methanol to yield formaldehyde. It possesses a NADH-dependent formaldehyde reductase activity and cannot use NADP. This Bacillus methanolicus protein is NAD-dependent methanol dehydrogenase.